Here is a 284-residue protein sequence, read N- to C-terminus: MKRNPVVAGMFYPAEYHELLEMIEYCYLSPRGPKELPSKRGNYTKPLGIVSPHAGYIYSGPVAAHGYKKISENINGEVTAIILGPNHTGLGSGISTMKGIWKTPFGDMEIDNEFADRLWKECDVLDLDENSHLREHSIEVQLPFLKHLEDLNIAKFKFVPICMMMQDYETSMDVGYFIAKVAKEMNRKIIIIASTDFSHYESQESASKKDALVIKDILELKDEEIFTDVVTHNISMCGYGPVIAMIKAMKDLGAKNSNLLYYSTSGDVTKDYSEVVGYASILVK.

Belongs to the MEMO1 family.

The polypeptide is MEMO1 family protein MmarC5_0191 (Methanococcus maripaludis (strain C5 / ATCC BAA-1333)).